The sequence spans 307 residues: Acetaldehyde dehydrogenase 2 (307 aa).

13–16 provides a ligand contact to NAD(+); that stretch reads SGNI. The Acyl-thioester intermediate role is filled by Cys132. NAD(+)-binding positions include 163–171 and Asn274; that span reads SIGPGTRAN.

The protein belongs to the acetaldehyde dehydrogenase family.

It catalyses the reaction acetaldehyde + NAD(+) + CoA = acetyl-CoA + NADH + H(+). This is Acetaldehyde dehydrogenase 2 from Methylibium petroleiphilum (strain ATCC BAA-1232 / LMG 22953 / PM1).